We begin with the raw amino-acid sequence, 403 residues long: ESX-5 secretion system protein EccE5 (403 aa).

Transmembrane regions (helical) follow at residues 9-29 (LALS…ILIV) and 43-63 (IAWW…VVTY).

It belongs to the EccE family. In terms of assembly, part of the ESX-5 / type VII secretion system (T7SS), which is composed of cytosolic and membrane components. The ESX-5 membrane complex is composed of EccB5, EccC5, EccD5 and EccE5.

It localises to the cell inner membrane. Part of the ESX-5 specialized secretion system, which is responsible for the secretion of EsxN and a number of PE_PGRS and PPE proteins. The polypeptide is ESX-5 secretion system protein EccE5 (Mycobacterium marinum (strain ATCC BAA-535 / M)).